The following is a 327-amino-acid chain: Diacylglycerol acyltransferase/mycolyltransferase Ag85B (327 aa).

Positions 1 to 38 (MIDVSGKIRAWGRWLLVGAAATLPSLISLAGGAATASA) are cleaved as a signal peptide. 80-81 (LR) contacts substrate. The interval 96–106 (FEWYYQSGLSV) is fibronectin-binding. Cys-125 and Cys-130 are disulfide-bonded. Substrate is bound by residues Ser-164 and Asp-192. The active-site Nucleophile is Ser-164. The active site involves Glu-268. Substrate-binding positions include 270–273 (FVHG), Lys-277, and 300–302 (HSW). His-300 is an active-site residue.

This sequence belongs to the mycobacterial A85 antigen family.

It is found in the secreted. The enzyme catalyses 2 alpha,alpha'-trehalose 6-mycolate = alpha,alpha'-trehalose 6,6'-bismycolate + alpha,alpha-trehalose. It catalyses the reaction an acyl-CoA + a 1,2-diacyl-sn-glycerol = a triacyl-sn-glycerol + CoA. Its function is as follows. The antigen 85 proteins (FbpA, FbpB, FbpC) are responsible for the high affinity of mycobacteria for fibronectin, a large adhesive glycoprotein, which facilitates the attachment of M.tuberculosis to murine alveolar macrophages (AMs). They also help to maintain the integrity of the cell wall by catalyzing the transfer of mycolic acids to cell wall arabinogalactan and through the synthesis of alpha,alpha-trehalose dimycolate (TDM, cord factor). They catalyze the transfer of a mycoloyl residue from one molecule of alpha,alpha-trehalose monomycolate (TMM) to another TMM, leading to the formation of TDM. The polypeptide is Diacylglycerol acyltransferase/mycolyltransferase Ag85B (fbpB) (Mycobacterium leprae (strain TN)).